The primary structure comprises 181 residues: Ribosome maturation factor RimM (181 aa).

A PRC barrel domain is found at E98–L177.

It belongs to the RimM family. In terms of assembly, binds ribosomal protein uS19.

The protein resides in the cytoplasm. In terms of biological role, an accessory protein needed during the final step in the assembly of 30S ribosomal subunit, possibly for assembly of the head region. Essential for efficient processing of 16S rRNA. May be needed both before and after RbfA during the maturation of 16S rRNA. It has affinity for free ribosomal 30S subunits but not for 70S ribosomes. The protein is Ribosome maturation factor RimM of Helicobacter pylori (strain J99 / ATCC 700824) (Campylobacter pylori J99).